Reading from the N-terminus, the 294-residue chain is Large ribosomal subunit protein uL2c (294 aa).

Residues 224–249 (VMNPVDHPHGGGGEGKSPIGRSRPVT) form a disordered region.

The protein belongs to the universal ribosomal protein uL2 family. As to quaternary structure, part of the 50S ribosomal subunit.

It localises to the plastid. Its subcellular location is the chloroplast. This is Large ribosomal subunit protein uL2c (rpl2) from Porphyra purpurea (Red seaweed).